The primary structure comprises 552 residues: Non-structural protein NS1 (552 aa).

The protein belongs to the orbivirus non-structural protein NS1 family.

This Bluetongue virus 13 (isolate USA) (BTV 13) protein is Non-structural protein NS1 (Segment-5).